We begin with the raw amino-acid sequence, 470 residues long: MAKKYDAGVKEYRDTYFTPDYVPLDTDLLACFKCTGQEGVPKEEVAAAVAAESSTGTWSTVWSELLVDLEFYKGRCYRIEDVPGDKDAFYAFIAYPLDLFEEGSITNVLTSLVGNVFGFKALRHLRLEDIRFPMAFIKTCGGPPSGIVVERDRLNKYGRPLLGCTIKPKLGLSGKNYGRVVYECLRGGLDLTKDDENINSQPFQRWRERFEFVAEAVKLAQQETGEVKGHYLNCTATTPEEMYKRAEFAKELDMPIIMHDYITGGFTANTGLANWCRENGMLLHIHRAMHAVIDRHPQHGIHFRVLAKCLRLSGGDQLHTGTVVGKLEGDRQTTLGYIDNLRESFVPEDRTRGNFFDQDWGSMPGVFAVASGGIHVWHMPALLAIFGDDSCLQFGGGTHGHPWGSAAGAAANRVALEACVKARNAGREIEKESRDILLEAAKHSPELAIALETWKEIKFEFDTVDKLDVQ.

Substrate is bound by residues Asn-115 and Thr-165. Residue Lys-167 is the Proton acceptor of the active site. Substrate is bound at residue Lys-169. Mg(2+)-binding residues include Lys-193, Asp-195, and Glu-196. Lys-193 carries the post-translational modification N6-carboxylysine. His-286 serves as the catalytic Proton acceptor. Substrate is bound by residues Arg-287, His-319, and Ser-371.

The protein belongs to the RuBisCO large chain family. Type I subfamily. In terms of assembly, heterohexadecamer of 8 large chains and 8 small chains. Requires Mg(2+) as cofactor.

The protein localises to the carboxysome. It carries out the reaction 2 (2R)-3-phosphoglycerate + 2 H(+) = D-ribulose 1,5-bisphosphate + CO2 + H2O. The catalysed reaction is D-ribulose 1,5-bisphosphate + O2 = 2-phosphoglycolate + (2R)-3-phosphoglycerate + 2 H(+). Its function is as follows. RuBisCO catalyzes two reactions: the carboxylation of D-ribulose 1,5-bisphosphate, the primary event in carbon dioxide fixation, as well as the oxidative fragmentation of the pentose substrate in the photorespiration process. Both reactions occur simultaneously and in competition at the same active site. The chain is Ribulose bisphosphate carboxylase large chain from Prochlorococcus marinus (strain NATL1A).